Consider the following 327-residue polypeptide: L-lactate dehydrogenase (327 aa).

Residues V18, D39, K44, Y69, and 83–84 (GA) each bind NAD(+). Substrate contacts are provided by residues Q86, R92, and 124-127 (NPVD). NAD(+)-binding positions include 122–124 (AAN) and S147. 152–155 (DSAR) contacts substrate. 2 residues coordinate beta-D-fructose 1,6-bisphosphate: R157 and H172. The active-site Proton acceptor is the H179. Y224 carries the post-translational modification Phosphotyrosine. T233 is a substrate binding site.

It belongs to the LDH/MDH superfamily. LDH family. As to quaternary structure, homotetramer.

The protein localises to the cytoplasm. The catalysed reaction is (S)-lactate + NAD(+) = pyruvate + NADH + H(+). It participates in fermentation; pyruvate fermentation to lactate; (S)-lactate from pyruvate: step 1/1. Allosterically activated by fructose 1,6-bisphosphate (FBP). In terms of biological role, catalyzes the conversion of lactate to pyruvate. The polypeptide is L-lactate dehydrogenase (Streptococcus uberis (strain ATCC BAA-854 / 0140J)).